The chain runs to 853 residues: Wolframin (853 aa).

Residues K139 to E179 form a disordered region. Over residues K144–R157 the composition is skewed to basic residues. Acidic residues predominate over residues G169–E179. The next 10 membrane-spanning stretches (helical) occupy residues M238–V258, S259–W279, L285–L305, L347–W367, L373–S393, F446–A466, G473–A493, I513–I533, W545–N565, and I572–M592. N-linked (GlcNAc...) asparagine glycosylation is found at N694 and N769.

As to expression, detected in adult brain.

The protein resides in the membrane. It localises to the endoplasmic reticulum. The protein localises to the mitochondrion. Functionally, participates in the regulation of cellular Ca(2+) homeostasis, at least partly, by modulating the filling state of the endoplasmic reticulum Ca(2+) store. In neurons and glial cells, has a role in maintaining neuronal function and integrity during aging. The sequence is that of Wolframin from Drosophila melanogaster (Fruit fly).